We begin with the raw amino-acid sequence, 179 residues long: UPF0227 protein VC0395_A1482/VC395_2007 (179 aa).

Belongs to the UPF0227 family.

This chain is UPF0227 protein VC0395_A1482/VC395_2007, found in Vibrio cholerae serotype O1 (strain ATCC 39541 / Classical Ogawa 395 / O395).